Here is a 542-residue protein sequence, read N- to C-terminus: Chaperonin GroEL 3 (542 aa).

ATP contacts are provided by residues threonine 29–proline 32, aspartate 86–threonine 90, glycine 413, asparagine 477–alanine 479, and aspartate 493.

Belongs to the chaperonin (HSP60) family. In terms of assembly, forms a cylinder of 14 subunits composed of two heptameric rings stacked back-to-back. Interacts with the co-chaperonin GroES.

The protein localises to the cytoplasm. The enzyme catalyses ATP + H2O + a folded polypeptide = ADP + phosphate + an unfolded polypeptide.. Its function is as follows. Together with its co-chaperonin GroES, plays an essential role in assisting protein folding. The GroEL-GroES system forms a nano-cage that allows encapsulation of the non-native substrate proteins and provides a physical environment optimized to promote and accelerate protein folding. This chain is Chaperonin GroEL 3, found in Frankia alni (strain DSM 45986 / CECT 9034 / ACN14a).